The primary structure comprises 116 residues: Ig heavy chain V region 1B43 (116 aa).

Positions Met1 to Ser18 are cleaved as a signal peptide. The tract at residues Asp19 to Thr48 is framework-1. A disulfide bond links Cys40 and Cys114. A complementarity-determining-1 region spans residues Ser49 to Trp53. Positions His54–Met67 are framework-2. The complementarity-determining-2 stretch occupies residues Gly68 to Ser84. Residues Arg85–Arg116 are framework-3.

This is Ig heavy chain V region 1B43 from Mus musculus (Mouse).